The chain runs to 544 residues: Zinc finger and SCAN domain-containing protein 25 (544 aa).

Glycyl lysine isopeptide (Lys-Gly) (interchain with G-Cter in SUMO2) cross-links involve residues Lys3 and Lys22. An SCAN box domain is found at 42–124; the sequence is RLRFRQFRYQ…AMVEDLTERA (83 aa). Residue Lys128 forms a Glycyl lysine isopeptide (Lys-Gly) (interchain with G-Cter in SUMO2) linkage. Positions 157-189 are disordered; the sequence is VEVKPEWGMPPGEGVQGPDPGTEEQLSQDPGDE. Glycyl lysine isopeptide (Lys-Gly) (interchain with G-Cter in SUMO2) cross-links involve residues Lys278 and Lys285. C2H2-type zinc fingers lie at residues 348–370, 375–397, 403–425, 431–453, 459–480, and 486–508; these read FQCP…QRTH, YGCV…QRTH, YVCS…QRSH, YKCG…RRTH, YTCE…RRAH, and YGCQ…QRIH. Residues 514 to 536 form a C2H2-type 7; degenerate zinc finger; sequence YHCPACGRSFNQRSILNRHQKTQ.

Belongs to the krueppel C2H2-type zinc-finger protein family.

It is found in the nucleus. In terms of biological role, may be involved in transcriptional regulation. This chain is Zinc finger and SCAN domain-containing protein 25 (ZSCAN25), found in Homo sapiens (Human).